The sequence spans 593 residues: Potassium channel KAT6 (593 aa).

Residues 1–33 (MAASRSELLRPAFGEPSPSLGPFVVNPHTCSYR) are Cytoplasmic-facing. A helical membrane pass occupies residues 34–54 (WWQKFLIVLVLYTAWASPFEL). The Extracellular portion of the chain corresponds to 55–64 (AMEKSASAAL). Residues 65–85 (AVTELVVDAFFAVDIAVSFFV) traverse the membrane as a helical segment. Residues 86 to 106 (AYRDASTGLLVTDRKKIATRH) are Cytoplasmic-facing. Residues 107–129 (LARPCLALDVASTIPLQMIYRIV) form a helical membrane-spanning segment. Over 130-138 (SGKRQALYG) the chain is Extracellular. The chain crosses the membrane as a helical; Voltage-sensor span at residues 139 to 159 (LLNLLRLWRLRRVSKLFARLE). The Cytoplasmic portion of the chain corresponds to 160–173 (KDIRFSYLWTRLIK). Residues 174-194 (LLYVTLFAVHFASCIYLWMAF) form a helical membrane-spanning segment. Residues 195-221 (HHKAKELTWIGSQFHGFEDRSVWFCYT) are Extracellular-facing. Positions 222 to 241 (CAVYWSITTLATVGYGDLHA) form an intramembrane region, pore-forming. Residues 242–247 (ANTGEM) lie on the Extracellular side of the membrane. Residues 248–268 (LFSIAFMLFNMGLTSYIIGNI) form a helical membrane-spanning segment. At 269 to 593 (TNLVVHETTN…RDGDHLFFSW (325 aa)) the chain is on the cytoplasmic side. 350–470 (LFQGVSDKLV…VVVFSNFVLY (121 aa)) lines the a nucleoside 3',5'-cyclic phosphate pocket. Positions 522–593 (RVSIHEHLLN…RDGDHLFFSW (72 aa)) constitute a KHA domain.

The protein belongs to the potassium channel family. Plant (TC 1.A.1.4) subfamily.

It localises to the membrane. Its function is as follows. Probable inward-rectifying potassium channel. Assuming opened or closed conformations in response to the voltage difference across the membrane, the channel is activated by hyperpolarization. This is Potassium channel KAT6 from Oryza sativa subsp. japonica (Rice).